The sequence spans 320 residues: Ferrochelatase (320 aa).

The Fe cation site is built by H194 and E275.

The protein belongs to the ferrochelatase family. Monomer.

Its subcellular location is the cytoplasm. The enzyme catalyses heme b + 2 H(+) = protoporphyrin IX + Fe(2+). Its pathway is porphyrin-containing compound metabolism; protoheme biosynthesis; protoheme from protoporphyrin-IX: step 1/1. In terms of biological role, catalyzes the ferrous insertion into protoporphyrin IX. The polypeptide is Ferrochelatase (Escherichia coli (strain 55989 / EAEC)).